The chain runs to 868 residues: Leucine--tRNA ligase (868 aa).

Positions 42 to 52 (PYPSGKLHMGH) match the 'HIGH' region motif. A 'KMSKS' region motif is present at residues 624-628 (TMSKS). ATP is bound at residue K627.

This sequence belongs to the class-I aminoacyl-tRNA synthetase family.

It is found in the cytoplasm. The enzyme catalyses tRNA(Leu) + L-leucine + ATP = L-leucyl-tRNA(Leu) + AMP + diphosphate. The sequence is that of Leucine--tRNA ligase from Nitrosomonas eutropha (strain DSM 101675 / C91 / Nm57).